The following is a 382-amino-acid chain: F-box protein At3g19470 (382 aa).

An F-box domain is found at 1-44 (MYNLPRDLPEEVLCRIPLTSLRPVRSTCKKWSTLSKCGSFAKKH).

In Arabidopsis thaliana (Mouse-ear cress), this protein is F-box protein At3g19470.